A 240-amino-acid chain; its full sequence is UDP-2,3-diacylglucosamine hydrolase (240 aa).

Residues D8, H10, D41, N79, and H114 each coordinate Mn(2+). Position 79 to 80 (79 to 80 (NR)) interacts with substrate. Substrate-binding residues include D122, S160, N164, K167, and H195. The Mn(2+) site is built by H195 and H197.

This sequence belongs to the LpxH family. The cofactor is Mn(2+).

The protein localises to the cell inner membrane. The enzyme catalyses UDP-2-N,3-O-bis[(3R)-3-hydroxytetradecanoyl]-alpha-D-glucosamine + H2O = 2-N,3-O-bis[(3R)-3-hydroxytetradecanoyl]-alpha-D-glucosaminyl 1-phosphate + UMP + 2 H(+). It functions in the pathway glycolipid biosynthesis; lipid IV(A) biosynthesis; lipid IV(A) from (3R)-3-hydroxytetradecanoyl-[acyl-carrier-protein] and UDP-N-acetyl-alpha-D-glucosamine: step 4/6. In terms of biological role, hydrolyzes the pyrophosphate bond of UDP-2,3-diacylglucosamine to yield 2,3-diacylglucosamine 1-phosphate (lipid X) and UMP by catalyzing the attack of water at the alpha-P atom. Involved in the biosynthesis of lipid A, a phosphorylated glycolipid that anchors the lipopolysaccharide to the outer membrane of the cell. The polypeptide is UDP-2,3-diacylglucosamine hydrolase (Shigella dysenteriae serotype 1 (strain Sd197)).